The primary structure comprises 411 residues: Adenylosuccinate synthetase (411 aa).

GTP is bound by residues 11-17 (GDEGKGK) and 39-41 (GHT). The Proton acceptor role is filled by D12. The Mg(2+) site is built by D12 and G39. Residues 12–15 (DEGK), 37–40 (NAGH), T121, R135, Q215, T230, and R294 each bind IMP. Catalysis depends on H40, which acts as the Proton donor. 290-296 (TTTKRPR) is a substrate binding site. Residues R296, 322-324 (KLD), and 400-402 (STS) each bind GTP.

It belongs to the adenylosuccinate synthetase family. Homodimer. Mg(2+) serves as cofactor.

It is found in the cytoplasm. It catalyses the reaction IMP + L-aspartate + GTP = N(6)-(1,2-dicarboxyethyl)-AMP + GDP + phosphate + 2 H(+). Its pathway is purine metabolism; AMP biosynthesis via de novo pathway; AMP from IMP: step 1/2. Plays an important role in the de novo pathway of purine nucleotide biosynthesis. Catalyzes the first committed step in the biosynthesis of AMP from IMP. This is Adenylosuccinate synthetase from Helicobacter acinonychis (strain Sheeba).